Consider the following 688-residue polypeptide: MATKRLARRLGLIRRKSVTPASGNPGGSRLKQLYAYLIVVDFESTCWNDGKHHSSPEIIEFPAVLLNTATGEIESEFHAYVQPQEHPILSEFCTELTGIKQVQVDEGVPLKICLSQFCKWIHKLQQQQTISFAAGDSEPSTSEVKLCAFVTWSDWDLGVCLEYECRRKQLLKPVFLNSWIDLRATYRLFYKRKPKGLSGALQEVGIEFSGREHSGLDDSRNTALLAWKMIRDGCLMKITRSLNKVLTKKNPKILARNLGTDQVEEAATCNMSIQGPSIYQKELQSTVNAEENAQMNSVCVNSSCIKGQLQPKSNMKADLYNIRHSFPLFTTKSSTSVDQLHSPTLNPPLTMQKPSKSDQLALNDSSKSSTLNSNLVLVSTTIPSVNHVSDVEMGHTFDCLPMLAEWEDVVLLPASQAEPDTDCMPPVSDTNVSTSLNSAERSLVPEEPETLSYENFEDLQETPQNSETSKSIVYKSPHSTVYDVKGAKHPGSDASAFKLPKCKPFPFTSVHASAAYPSVLRKDPLLSGGTKRNSLSPPASPRTKRQTFTIHEEKPTSSICSPGTTSCRVSPSVLTSTVNLQEPWKTGKMTPPLCKCGRRSKRLIVSNNGPNHGKAFYCCPVGKYQQDRKCCGYFKWEQTLQKERTNGKALSHSSEGLTFSSPETSRIHDRNLSFPIKNSLRLRPSMRH.

Residues 37–226 (LIVVDFESTC…DDSRNTALLA (190 aa)) form the Exonuclease domain. Residues aspartate 41, glutamate 43, and aspartate 156 each contribute to the Mg(2+) site. Glutamate 43 functions as the Proton acceptor in the catalytic mechanism. Glutamate 43 provides a ligand contact to AMP. Histidine 213 functions as the Proton acceptor in the catalytic mechanism. Histidine 213 is a binding site for AMP. Residue aspartate 218 participates in Mg(2+) binding. The segment covering 337–360 (VDQLHSPTLNPPLTMQKPSKSDQL) has biased composition (polar residues). Disordered stretches follow at residues 337-367 (VDQL…DSSK) and 523-546 (DPLL…TKRQ). Zn(2+) contacts are provided by cysteine 594, cysteine 596, cysteine 619, and cysteine 631. The segment at 594-640 (CKCGRRSKRLIVSNNGPNHGKAFYCCPVGKYQQDRKCCGYFKWEQTL) adopts a GRF-type zinc-finger fold.

The protein belongs to the ERI2 family. Mg(2+) is required as a cofactor.

The chain is ERI1 exoribonuclease 2 (Eri2) from Mus musculus (Mouse).